Consider the following 507-residue polypeptide: ATP synthase subunit alpha, chloroplastic (507 aa).

170–177 (GDRQTGKT) serves as a coordination point for ATP.

Belongs to the ATPase alpha/beta chains family. In terms of assembly, F-type ATPases have 2 components, CF(1) - the catalytic core - and CF(0) - the membrane proton channel. CF(1) has five subunits: alpha(3), beta(3), gamma(1), delta(1), epsilon(1). CF(0) has four main subunits: a, b, b' and c.

The protein resides in the plastid. It localises to the chloroplast thylakoid membrane. It catalyses the reaction ATP + H2O + 4 H(+)(in) = ADP + phosphate + 5 H(+)(out). Its function is as follows. Produces ATP from ADP in the presence of a proton gradient across the membrane. The alpha chain is a regulatory subunit. This chain is ATP synthase subunit alpha, chloroplastic, found in Gossypium barbadense (Sea Island cotton).